A 147-amino-acid chain; its full sequence is Protein-export protein SecB (147 aa).

The protein belongs to the SecB family. Homotetramer, a dimer of dimers. One homotetramer interacts with 1 SecA dimer.

It is found in the cytoplasm. In terms of biological role, one of the proteins required for the normal export of preproteins out of the cell cytoplasm. It is a molecular chaperone that binds to a subset of precursor proteins, maintaining them in a translocation-competent state. It also specifically binds to its receptor SecA. The protein is Protein-export protein SecB of Neisseria gonorrhoeae (strain ATCC 700825 / FA 1090).